Here is a 622-residue protein sequence, read N- to C-terminus: Low affinity potassium transport system protein Kup (622 aa).

The next 12 membrane-spanning stretches (helical) occupy residues 12–32 (ITLA…LYTL), 49–69 (VFGF…LKYL), 101–121 (FLVI…VITP), 134–154 (IIAP…LTLL), 163–183 (GLVG…LAAL), 213–233 (VSFV…ALYA), 247–267 (WFTV…ALLL), 276–296 (PFFL…ATLA), 337–357 (IYIP…IVSF), 363–383 (LAAA…ILST), 395–415 (FLVA…FSAN), and 419–439 (IVSG…VMTT).

This sequence belongs to the HAK/KUP transporter (TC 2.A.72) family.

It localises to the cell inner membrane. The enzyme catalyses K(+)(in) + H(+)(in) = K(+)(out) + H(+)(out). Responsible for the low-affinity transport of potassium into the cell. Likely operates as a K(+):H(+) symporter. This chain is Low affinity potassium transport system protein Kup, found in Enterobacter sp. (strain 638).